The sequence spans 602 residues: MKNKNPFNIFFPLSLDKIENLEKIKKNCSSIQYAWLSGYFWNLANQTPSRLICEKNEFFRKDNEEKIITIISASQTGNARQLAKRFNKYLKNENKKTNLIDAADYNFKKIKNERFLILIISTQGEGEPPEEALSFYKFIMSKKAPRLENLHYSVFGLGDVSYNLFCQAGKDFDKRFSELGGKSLLHRLDSDIEYESNYIQWSEELLLAINKIDVSTCSVFKKNDKKNFIDKLNYTKYKPAVATVLLNQKITGRNSTKDVHHIELDITNSNIVYTPGDALGVWYQNSSQLIKQILKLLSIRISDKVKVKDKIITIFEALKKNFELTTNTKHIIQKYTDVTQNKFLKKIISDNKKLNNYVKKTPLLKMIYDHPKKLSSQQLISILRPLKPRLYSISSSQSEMNDEVHITVGVVKKQISGTIHLGGSSSYLSQFLKIDDSVKIFVEEKSNFRLPENKDVPIIMIGSGTGIAPFRAFIQQRDNDKATGKNWIFFGNPNFTEDFLYQLEWQKYLKKKLLTKMSLAWSRDQKEKIYVQDKIRENGKELWEWVNQGAQIYVCGNASKMAKDVEKELLDVFSKNGSMDIEESSEFLNNLRITRRYQRDVY.

One can recognise a Flavodoxin-like domain in the interval 68–206; the sequence is ITIISASQTG…NYIQWSEELL (139 aa). FMN-binding positions include 74–79, 121–124, and 157–166; these read SQTGNA, STQG, and LGDVSYNLFC. The 215-residue stretch at 237–451 folds into the FAD-binding FR-type domain; sequence YKPAVATVLL…VEEKSNFRLP (215 aa). FAD is bound by residues Thr-325, Lys-359, 389-392, 407-409, and 422-425; these read RLYS, TVG, and GGSS. NADP(+)-binding positions include 522 to 523, 528 to 532, and Asp-564; these read SR and KIYVQ. An FAD-binding site is contributed by Tyr-602.

This sequence belongs to the NADPH-dependent sulphite reductase flavoprotein subunit CysJ family. It in the N-terminal section; belongs to the flavodoxin family. In the C-terminal section; belongs to the flavoprotein pyridine nucleotide cytochrome reductase family. Alpha(8)-beta(8). The alpha component is a flavoprotein, the beta component is a hemoprotein. It depends on FAD as a cofactor. The cofactor is FMN.

The enzyme catalyses hydrogen sulfide + 3 NADP(+) + 3 H2O = sulfite + 3 NADPH + 4 H(+). The protein operates within sulfur metabolism; hydrogen sulfide biosynthesis; hydrogen sulfide from sulfite (NADPH route): step 1/1. Functionally, component of the sulfite reductase complex that catalyzes the 6-electron reduction of sulfite to sulfide. This is one of several activities required for the biosynthesis of L-cysteine from sulfate. The flavoprotein component catalyzes the electron flow from NADPH -&gt; FAD -&gt; FMN to the hemoprotein component. The sequence is that of Sulfite reductase [NADPH] flavoprotein alpha-component from Buchnera aphidicola subsp. Schizaphis graminum (strain Sg).